Here is a 193-residue protein sequence, read N- to C-terminus: Ribonuclease HII (193 aa).

Residues 15–193 (YIVAGVDEAG…SYHRKSFKFC (179 aa)) form the RNase H type-2 domain. The a divalent metal cation site is built by Asp-21, Glu-22, and Asp-112.

Belongs to the RNase HII family. Mn(2+) serves as cofactor. Requires Mg(2+) as cofactor.

The protein resides in the cytoplasm. It carries out the reaction Endonucleolytic cleavage to 5'-phosphomonoester.. Endonuclease that specifically degrades the RNA of RNA-DNA hybrids. The polypeptide is Ribonuclease HII (Rickettsia typhi (strain ATCC VR-144 / Wilmington)).